Here is a 188-residue protein sequence, read N- to C-terminus: Threonylcarbamoyl-AMP synthase (188 aa).

The 186-residue stretch at 3 to 188 folds into the YrdC-like domain; that stretch reads QLHPSDIKDV…RSGKILRNGQ (186 aa).

It belongs to the SUA5 family. TsaC subfamily.

The protein resides in the cytoplasm. The catalysed reaction is L-threonine + hydrogencarbonate + ATP = L-threonylcarbamoyladenylate + diphosphate + H2O. Functionally, required for the formation of a threonylcarbamoyl group on adenosine at position 37 (t(6)A37) in tRNAs that read codons beginning with adenine. Catalyzes the conversion of L-threonine, HCO(3)(-)/CO(2) and ATP to give threonylcarbamoyl-AMP (TC-AMP) as the acyladenylate intermediate, with the release of diphosphate. In Shewanella oneidensis (strain ATCC 700550 / JCM 31522 / CIP 106686 / LMG 19005 / NCIMB 14063 / MR-1), this protein is Threonylcarbamoyl-AMP synthase.